A 334-amino-acid chain; its full sequence is Glutaminase (334 aa).

Substrate is bound by residues Ser-76, Asn-126, Glu-170, Asn-177, Tyr-201, Tyr-253, and Val-271.

This sequence belongs to the glutaminase family. As to quaternary structure, homotetramer.

It carries out the reaction L-glutamine + H2O = L-glutamate + NH4(+). The sequence is that of Glutaminase from Nostoc sp. (strain PCC 7120 / SAG 25.82 / UTEX 2576).